The following is a 177-amino-acid chain: Large ribosomal subunit protein uL6 (177 aa).

This sequence belongs to the universal ribosomal protein uL6 family. As to quaternary structure, part of the 50S ribosomal subunit.

Its function is as follows. This protein binds to the 23S rRNA, and is important in its secondary structure. It is located near the subunit interface in the base of the L7/L12 stalk, and near the tRNA binding site of the peptidyltransferase center. The sequence is that of Large ribosomal subunit protein uL6 from Buchnera aphidicola subsp. Acyrthosiphon kondoi (Acyrthosiphon kondoi symbiotic bacterium).